A 166-amino-acid chain; its full sequence is Phosphopantetheine adenylyltransferase (166 aa).

Thr14 contacts substrate. ATP-binding positions include 14–15 (TF) and His22. 3 residues coordinate substrate: Lys46, Leu78, and Arg92. ATP is bound by residues 93–95 (GLR), Glu103, and 128–134 (WMYLSSS).

The protein belongs to the bacterial CoaD family. Homohexamer. The cofactor is Mg(2+).

Its subcellular location is the cytoplasm. It carries out the reaction (R)-4'-phosphopantetheine + ATP + H(+) = 3'-dephospho-CoA + diphosphate. It functions in the pathway cofactor biosynthesis; coenzyme A biosynthesis; CoA from (R)-pantothenate: step 4/5. In terms of biological role, reversibly transfers an adenylyl group from ATP to 4'-phosphopantetheine, yielding dephospho-CoA (dPCoA) and pyrophosphate. The protein is Phosphopantetheine adenylyltransferase of Maridesulfovibrio salexigens (strain ATCC 14822 / DSM 2638 / NCIMB 8403 / VKM B-1763) (Desulfovibrio salexigens).